A 59-amino-acid polypeptide reads, in one-letter code: Large ribosomal subunit protein uL30 (59 aa).

This sequence belongs to the universal ribosomal protein uL30 family. In terms of assembly, part of the 50S ribosomal subunit.

In Buchnera aphidicola subsp. Acyrthosiphon pisum (strain 5A), this protein is Large ribosomal subunit protein uL30.